The primary structure comprises 366 residues: Putative neutrophil cytosol factor 1C (366 aa).

A PX domain is found at 1-101; sequence MYMFLVKWQD…DFFKVRPDDL (101 aa). SH3 domains lie at 132-191 and 202-261; these read IILQ…PLDS and YAGE…KSGQ. The interval 261-366 is disordered; sequence QDVSQAQRQI…STKRKLASAV (106 aa). A phosphoserine mark is found at Ser279 and Ser280. Basic residues predominate over residues 285–294; the sequence is HSIHQRSRKR. 4 positions are modified to phosphoserine: Ser296, Ser304, Ser321, and Ser324.

The protein resides in the cytoplasm. In terms of biological role, may be required for activation of the latent NADPH oxidase (necessary for superoxide production). The chain is Putative neutrophil cytosol factor 1C (NCF1C) from Homo sapiens (Human).